A 206-amino-acid polypeptide reads, in one-letter code: Large ribosomal subunit protein uL4 (206 aa).

Residues 46-89 (GNRAQKTRAEVKHSTKKPWRQKGTGRARSGMTSSPLWRKGGRAF) form a disordered region. A compositionally biased stretch (basic residues) spans 59 to 70 (STKKPWRQKGTG).

Belongs to the universal ribosomal protein uL4 family. Part of the 50S ribosomal subunit.

One of the primary rRNA binding proteins, this protein initially binds near the 5'-end of the 23S rRNA. It is important during the early stages of 50S assembly. It makes multiple contacts with different domains of the 23S rRNA in the assembled 50S subunit and ribosome. In terms of biological role, forms part of the polypeptide exit tunnel. The polypeptide is Large ribosomal subunit protein uL4 (Neisseria gonorrhoeae (strain NCCP11945)).